The following is a 613-amino-acid chain: tRNA 5-methylaminomethyl-2-thiouridine biosynthesis bifunctional protein MnmC (613 aa).

Residues 1 to 225 (MKKAKLIFKD…KREMIKAYLE (225 aa)) form a tRNA (mnm(5)s(2)U34)-methyltransferase region. An FAD-dependent cmnm(5)s(2)U34 oxidoreductase region spans residues 252-613 (IGAGISSAVL…FLIRKLKKGL (362 aa)).

In the N-terminal section; belongs to the methyltransferase superfamily. tRNA (mnm(5)s(2)U34)-methyltransferase family. It in the C-terminal section; belongs to the DAO family. Requires FAD as cofactor.

Its subcellular location is the cytoplasm. It catalyses the reaction 5-aminomethyl-2-thiouridine(34) in tRNA + S-adenosyl-L-methionine = 5-methylaminomethyl-2-thiouridine(34) in tRNA + S-adenosyl-L-homocysteine + H(+). In terms of biological role, catalyzes the last two steps in the biosynthesis of 5-methylaminomethyl-2-thiouridine (mnm(5)s(2)U) at the wobble position (U34) in tRNA. Catalyzes the FAD-dependent demodification of cmnm(5)s(2)U34 to nm(5)s(2)U34, followed by the transfer of a methyl group from S-adenosyl-L-methionine to nm(5)s(2)U34, to form mnm(5)s(2)U34. This chain is tRNA 5-methylaminomethyl-2-thiouridine biosynthesis bifunctional protein MnmC, found in Campylobacter jejuni (strain RM1221).